The following is a 121-amino-acid chain: Tachykinin-3 (121 aa).

Positions 1 to 16 (MRIMLLFTAILAFSLA) are cleaved as a signal peptide. The propeptide occupies 17–78 (QSFGAVCKEP…TDPKESTSPE (62 aa)). Methionine amide is present on Met90. The disordered stretch occupies residues 93–121 (RSVQPDSPTDVNQENVPSFGILKYPPRAE). The propeptide occupies 94 to 121 (SVQPDSPTDVNQENVPSFGILKYPPRAE). The span at 96-108 (QPDSPTDVNQENV) shows a compositional bias: polar residues.

Belongs to the tachykinin family.

Its subcellular location is the secreted. Functionally, tachykinins are active peptides which excite neurons, evoke behavioral responses, are potent vasodilators and secretagogues, and contract (directly or indirectly) many smooth muscles. Is a critical central regulator of gonadal function. The chain is Tachykinin-3 (TAC3) from Homo sapiens (Human).